A 178-amino-acid chain; its full sequence is Cytochrome b6-f complex iron-sulfur subunit (178 aa).

A helical membrane pass occupies residues 20–42 (LLTFGTATGVALGALYPVANFFM). One can recognise a Rieske domain in the interval 71-161 (NHPAGDRSLV…IDIDDDNVLV (91 aa)). 4 residues coordinate [2Fe-2S] cluster: cysteine 107, histidine 109, cysteine 125, and histidine 128. The cysteines at positions 112 and 127 are disulfide-linked.

This sequence belongs to the Rieske iron-sulfur protein family. As to quaternary structure, the 4 large subunits of the cytochrome b6-f complex are cytochrome b6, subunit IV (17 kDa polypeptide, PetD), cytochrome f and the Rieske protein, while the 4 small subunits are PetG, PetL, PetM and PetN. The complex functions as a dimer. [2Fe-2S] cluster is required as a cofactor.

It localises to the cellular thylakoid membrane. It catalyses the reaction 2 oxidized [plastocyanin] + a plastoquinol + 2 H(+)(in) = 2 reduced [plastocyanin] + a plastoquinone + 4 H(+)(out). Its function is as follows. Component of the cytochrome b6-f complex, which mediates electron transfer between photosystem II (PSII) and photosystem I (PSI), cyclic electron flow around PSI, and state transitions. This is Cytochrome b6-f complex iron-sulfur subunit from Prochlorococcus marinus (strain SARG / CCMP1375 / SS120).